The sequence spans 140 residues: Small ribosomal subunit protein uS12 (140 aa).

Residue Asp-102 is modified to 3-methylthioaspartic acid.

The protein belongs to the universal ribosomal protein uS12 family. As to quaternary structure, part of the 30S ribosomal subunit. Contacts proteins S8 and S17. May interact with IF1 in the 30S initiation complex.

In terms of biological role, with S4 and S5 plays an important role in translational accuracy. Its function is as follows. Interacts with and stabilizes bases of the 16S rRNA that are involved in tRNA selection in the A site and with the mRNA backbone. Located at the interface of the 30S and 50S subunits, it traverses the body of the 30S subunit contacting proteins on the other side and probably holding the rRNA structure together. The combined cluster of proteins S8, S12 and S17 appears to hold together the shoulder and platform of the 30S subunit. This is Small ribosomal subunit protein uS12 from Bacillus cytotoxicus (strain DSM 22905 / CIP 110041 / 391-98 / NVH 391-98).